Reading from the N-terminus, the 326-residue chain is Triacylglycerol lipase 2 (326 aa).

The short motif at alanine 142–glycine 146 is the (A/G)XSXG lipase motif element.

In terms of assembly, interacts with MIA40; forms mixed disulfide intermediates with MIA40.

It is found in the mitochondrion. The protein resides in the mitochondrion intermembrane space. The enzyme catalyses a triacylglycerol + H2O = a diacylglycerol + a fatty acid + H(+). It catalyses the reaction 1,2,3-tri-(9Z-octadecenoyl)-glycerol + H2O = di-(9Z)-octadecenoylglycerol + (9Z)-octadecenoate + H(+). The catalysed reaction is 1,2,3-tributanoylglycerol + H2O = dibutanoylglycerol + butanoate + H(+). It carries out the reaction 1,2,3-trioctanoylglycerol + H2O = dioctanoylglycerol + octanoate + H(+). The enzyme catalyses di-(9Z)-octadecenoylglycerol + H2O = (9Z-octadecenoyl)-glycerol + (9Z)-octadecenoate + H(+). It catalyses the reaction dioctanoylglycerol + H2O = octanoylglycerol + octanoate + H(+). Functionally, mitochondrial triacylglycerol (TAG) lipase with activity toward long-chain diacylglycerols (DAGs) and triacylglycerols (TAGs). Involved in mitochondrial lipid metabolism. The sequence is that of Triacylglycerol lipase 2 (TGL2) from Saccharomyces cerevisiae (strain ATCC 204508 / S288c) (Baker's yeast).